The chain runs to 146 residues: UPF0260 protein Swoo_2117 (146 aa).

The protein belongs to the UPF0260 family.

The sequence is that of UPF0260 protein Swoo_2117 from Shewanella woodyi (strain ATCC 51908 / MS32).